The chain runs to 105 residues: N(4)-acetylcytidine amidohydrolase (105 aa).

The ASCH domain occupies 8 to 93; sequence TFFEFLTPLV…ALIQEIYPNI (86 aa). Lysine 22 acts as the Proton acceptor in catalysis. Threonine 25 (nucleophile) is an active-site residue. Glutamate 75 acts as the Proton donor in catalysis.

It belongs to the N(4)-acetylcytidine amidohydrolase family.

The catalysed reaction is N(4)-acetylcytidine + H2O = cytidine + acetate + H(+). It carries out the reaction N(4)-acetyl-2'-deoxycytidine + H2O = 2'-deoxycytidine + acetate + H(+). It catalyses the reaction N(4)-acetylcytosine + H2O = cytosine + acetate + H(+). Its function is as follows. Catalyzes the hydrolysis of N(4)-acetylcytidine (ac4C). This Vibrio cholerae serotype O1 (strain ATCC 39315 / El Tor Inaba N16961) protein is N(4)-acetylcytidine amidohydrolase.